A 414-amino-acid polypeptide reads, in one-letter code: Glucose-1-phosphate adenylyltransferase (414 aa).

Alpha-D-glucose 1-phosphate contacts are provided by residues Gly164, 184–185, and Ser204; that span reads EK.

It belongs to the bacterial/plant glucose-1-phosphate adenylyltransferase family. In terms of assembly, homotetramer.

It catalyses the reaction alpha-D-glucose 1-phosphate + ATP + H(+) = ADP-alpha-D-glucose + diphosphate. Its pathway is glycan biosynthesis; glycogen biosynthesis. Functionally, involved in the biosynthesis of ADP-glucose, a building block required for the elongation reactions to produce glycogen. Catalyzes the reaction between ATP and alpha-D-glucose 1-phosphate (G1P) to produce pyrophosphate and ADP-Glc. This Acidothermus cellulolyticus (strain ATCC 43068 / DSM 8971 / 11B) protein is Glucose-1-phosphate adenylyltransferase.